A 407-amino-acid polypeptide reads, in one-letter code: Substance-P receptor (407 aa).

At 1-31 the chain is on the extracellular side; the sequence is MDNVLPVDSDLSPNISTNTSEPNQFVQPAWQ. N-linked (GlcNAc...) asparagine glycosylation is found at Asn-14 and Asn-18. Residues 32–54 form a helical membrane-spanning segment; sequence IVLWAAAYTVIVVTSVVGNVVVM. Residues 55 to 64 are Cytoplasmic-facing; the sequence is WIILAHKRMR. The chain crosses the membrane as a helical span at residues 65–86; sequence TVTNYFLVNLAFAEASMAAFNT. At 87–106 the chain is on the extracellular side; the sequence is VVNFTYAVHNEWYYGLFYCK. A disulfide bridge connects residues Cys-105 and Cys-180. A helical transmembrane segment spans residues 107-128; sequence FHNFFPIAAVFASIYSMTAVAF. Residues 129–148 lie on the Cytoplasmic side of the membrane; the sequence is DRYMAIIHPLQPRLSATATK. A helical transmembrane segment spans residues 149–169; the sequence is VVICVIWVLALLLAFPQGYYS. The Extracellular segment spans residues 170–194; that stretch reads TTETMPSRVVCMIEWPEHPNKIYEK. The chain crosses the membrane as a helical span at residues 195–219; the sequence is VYHICVTVLIYFLPLLVIGYAYTVV. His-197 provides a ligand contact to CP-96345. At 220-248 the chain is on the cytoplasmic side; sequence GITLWASEIPGDSSDRYHEQVSAKRKVVK. Residues 249 to 270 traverse the membrane as a helical segment; that stretch reads MMIVVVCTFAICWLPFHIFFLL. The Extracellular portion of the chain corresponds to 271–283; that stretch reads PYINPDLYLKKFI. A helical transmembrane segment spans residues 284–308; it reads QQVYLAIMWLAMSSTMYNPIIYCCL. Residues 309 to 407 are Cytoplasmic-facing; sequence NDRFRLGFKH…SFSFSSNVLS (99 aa). The S-palmitoyl cysteine moiety is linked to residue Cys-322. A disordered region spans residues 364–407; it reads AHEEEPEDGPKATPSSLDLTSNCSSRSDSKTMTESFSFSSNVLS. Residues 376–407 show a composition bias toward polar residues; that stretch reads TPSSLDLTSNCSSRSDSKTMTESFSFSSNVLS.

The protein belongs to the G-protein coupled receptor 1 family. As to quaternary structure, interacts with ARRB1.

The protein localises to the cell membrane. In terms of biological role, this is a receptor for the tachykinin neuropeptide substance P. It is probably associated with G proteins that activate a phosphatidylinositol-calcium second messenger system. The rank order of affinity of this receptor to tachykinins is: substance P &gt; substance K &gt; neuromedin-K. This chain is Substance-P receptor (TACR1), found in Homo sapiens (Human).